The sequence spans 447 residues: MIRKTLGKLYVQVLIGVAAGIVQGVAAPNLGSDLKPLGDVFIKLIKMVFAPIIFATVTLGIARMENMKELGRVGVRALVYFEVLSTFALALGLIVVNLVQPGQGMNVDAAHLDTKAIASYTHAAARPQTFVDFLLSLVPSSIIDALARNDILQILVFATLFGIALSRMGTRARPVVDFLDVFTQGVFSIVGMIMRLAPIAAFGAMAFTVGKYGLGSIAALGKLMATMYLTCVLFVAIVLGGVARLAGFSLWKFLRYIRDEIFTVLGTSSSESVVPQLMRKLESAGVSKPVVGLVVPSGLTFNPDGQCIYYTMAAIFVAQATNTPLTLTDQLVVLGVLLLTSKGSAGVTGSGFITLAATLASLGKIPVAGMVLLLGIDRFMSEARAITNTIGNAVGTLAIARWVGAVDRERLQAALDGVPEAAQTPPQAVHVHAPVAHVEAAHPPLAH.

Transmembrane regions (helical) follow at residues 5 to 27, 42 to 64, 77 to 99, 146 to 165, 186 to 208, 223 to 245, 315 to 337, and 352 to 374; these read TLGK…GVAA, IKLI…IARM, ALVY…VNLV, LARN…GIAL, VFSI…MAFT, LMAT…VARL, IFVA…LGVL, and FITL…VLLL.

Belongs to the dicarboxylate/amino acid:cation symporter (DAACS) (TC 2.A.23) family.

It localises to the cell inner membrane. In terms of biological role, responsible for the transport of dicarboxylates such as succinate, fumarate, and malate from the periplasm across the membrane. This Ralstonia nicotianae (strain ATCC BAA-1114 / GMI1000) (Ralstonia solanacearum) protein is C4-dicarboxylate transport protein 3 (dctA3).